Here is a 1339-residue protein sequence, read N- to C-terminus: MADMSIPLHSLRFNNMMKEENGDPQNRGATFSRPMTETRAEVQILHSQLQLPVVSTSASDLEGTSTQLMTSPGFDSLSTPLMGAPHSGTLSPPLMSASDSGTLSPLLMPASDSGTLSPLLMPVSDSGTLSPLLMPASDSGTLSPLLSTSDYGLMSPGMMSIPDFGTMSSLMAAPDSAEISPLAMPIQSSGVISAPIMSTSSSEASLMLGSDPGEISPLLIPDMNPGVTSTPPMTAPGSEAMSPLQITDEDTEAMSKVLMTALASGEISSLLMSGTDSEAISSLIMSALASGETPAQPTNPPESEGIPTVLMSGSDSAVMSSLPMPVSGSGAMPTPLLSIPDAGEIATLPKPVPDVEAMSPLLMTALTSTVMPSQLISASSSGVMSPDTTQNINSEVMSAPPIRVSSTGLMSTLPVRASDTAATPIQLMRVPASGNMSTSQKTVPVSGSMSTPLMAVTSPGAIFTEQMPSTASGTMSTHLTMPQTPGTMPIGFMKSTSNGAVSAQQIRCSVSGMMSTQPVIATASEIMSVSQSTVPTSGSVSTQKTRAPVSGPMSTTQIRTTASALTSTPQMRATASGTMSIPLMTAKTSGSASTLLMRDTASGVISVPQMRAPGSGTVSKPLMTSKASGMFMQQMTTAAFGATPTSLMRDTASGGLSMPQMTDPASGGMSTLLTRATASGTKSTSQMTATTSGGIFMPQTRLSGPGATSTPLMRATASEKMPSQAMNIQDSGGVSTPLMRPVALGGVQMRSQGSGTMSTPLLRASDSSEMSMLLTKAPSSGERPLLLVRPPASGEIAPHSRTPVYGTISAPHMTTTASGVMTMSPMKTSVPVSESATLLRPTDSGVMSIPLTRTPASRAKSRPQMATACGDMCPLPVRAPATAGISPSPVRSPASSTLSTLLRRPSDGAVTAELERVLGPAQFAAMTPGEMSKPLMRASAPGTTTMPLMSPMTSGEMSMPLMKTTPSGTMSTLQTKVMSSRATSLPQPRNAASGVIANPPQRAPASGAGSTPLMRVSGSGMMSTPLLGATASGGMSMPQMAPPTSGDMFSPLMRSPAPGIMSTPQTAFGMTPTLNVKATDSGEASTSHTRFTAPGSKSTPHMTSTAPEMKTPPPKEVPSFGMLTPALCYLLEEQEAARGSSSVEEDAEEIDEEKQMKGFLDDSEKMAFLVSLHLGAAERWSILQMEVGNPISSDNKAFLRRSQGLYDSLSEIDILSAVLCHPKQGKKSVRQYATDFLLLARHLSWSDAILRTRFLEGLSEAVTTKMGRIFLKVAGSLKELIDRSLYTECQLAEEKDSSGNSNQVVPTSCKRNNEEAMENELGSQQQTEEVIKGTYAHGF.

Composition is skewed to polar residues over residues 533-545, 679-693, and 700-711; these read TVPT…TQKT, SGTK…TTSG, and TRLSGPGATSTP. Disordered regions lie at residues 533–555, 679–711, 845–864, 880–901, 982–1010, and 1078–1116; these read TVPT…PMST, SGTK…TSTP, GVMS…SRPQ, PATA…LSTL, ATSL…GAGS, and ATDS…PPKE. Residues 891–901 show a composition bias toward low complexity; that stretch reads RSPASSTLSTL. Over residues 1078–1106 the composition is skewed to polar residues; the sequence is ATDSGEASTSHTRFTAPGSKSTPHMTSTA.

This chain is Retrotransposon Gag-like protein 9, found in Mus musculus (Mouse).